The sequence spans 261 residues: Major biofilm matrix component (261 aa).

The signal sequence occupies residues 1–27 (MGMKKKLSLGVASAALGLALVGGGTWA). The tract at residues 241 to 261 (DHTDKDGYVKENEKAHSEDKN) is disordered.

Belongs to the peptidase M73 family. As to quaternary structure, forms fibers. Fibers have variable length and are 10-15 nm width. Interacts with obg (AC P20964) in pull-down experiments.

Its subcellular location is the secreted. It localises to the forespore intermembrane space. Its function is as follows. TasA is the major protein component of the biofilm extracellular matrix. It forms amyloid fibers that bind cells together in the biofilm. Exhibits an antibacterial activity against a variety of Gram-positive and Gram-negative bacteria. In laboratory strains, is also involved in proper spore coat assembly. This chain is Major biofilm matrix component, found in Bacillus subtilis (strain 168).